Here is a 194-residue protein sequence, read N- to C-terminus: MRSPHAFRNGESPTLRDHTHFHSTVTAQKLRRFNSLILLLRLASFSFSLASAVFMLTNSRGSASPHWYDFDAFRFVFVANAIVALYSVFEMGTCVWEFSRETTLWPEAFQVWFDFGHDQVFSYLLLSAGSAAAALARTMRGGDTCTANKAFCLQSDVAIGLGFAAFLFLAFSSCFSGFRVACFLITGSRFHLYS.

Residues 1–35 are Cytoplasmic-facing; sequence MRSPHAFRNGESPTLRDHTHFHSTVTAQKLRRFNS. Residues 36–56 form a helical membrane-spanning segment; that stretch reads LILLLRLASFSFSLASAVFML. The Extracellular segment spans residues 57–74; sequence TNSRGSASPHWYDFDAFR. Residues 75–95 form a helical membrane-spanning segment; sequence FVFVANAIVALYSVFEMGTCV. Residues 96–114 lie on the Cytoplasmic side of the membrane; the sequence is WEFSRETTLWPEAFQVWFD. The chain crosses the membrane as a helical span at residues 115–135; sequence FGHDQVFSYLLLSAGSAAAAL. At 136 to 157 the chain is on the extracellular side; that stretch reads ARTMRGGDTCTANKAFCLQSDV. A helical membrane pass occupies residues 158–178; the sequence is AIGLGFAAFLFLAFSSCFSGF. The Cytoplasmic portion of the chain corresponds to 179–194; it reads RVACFLITGSRFHLYS.

It belongs to the Casparian strip membrane proteins (CASP) family. As to quaternary structure, homodimer and heterodimers.

It localises to the cell membrane. This chain is CASP-like protein 4C1, found in Arabidopsis thaliana (Mouse-ear cress).